The following is a 257-amino-acid chain: Hydroxyacylglutathione hydrolase (257 aa).

7 residues coordinate Zn(2+): His56, His58, Asp60, His61, His112, Asp131, and His169.

Belongs to the metallo-beta-lactamase superfamily. Glyoxalase II family. As to quaternary structure, monomer. It depends on Zn(2+) as a cofactor.

The enzyme catalyses an S-(2-hydroxyacyl)glutathione + H2O = a 2-hydroxy carboxylate + glutathione + H(+). It functions in the pathway secondary metabolite metabolism; methylglyoxal degradation; (R)-lactate from methylglyoxal: step 2/2. Its function is as follows. Thiolesterase that catalyzes the hydrolysis of S-D-lactoyl-glutathione to form glutathione and D-lactic acid. This Ectopseudomonas mendocina (strain ymp) (Pseudomonas mendocina) protein is Hydroxyacylglutathione hydrolase.